Consider the following 131-residue polypeptide: MQVKSHKPSKQRKYLYNAPIHHRGKIMSAPLSEELKSKYGINSIPIRKGDRVKVMRGDYRGTEGEVISVDRKRYRIAVKGIVRRKADGTEVPVPIHPSKVVITKLYLKDEARKRLLERKGVKVEEIVEESE.

It belongs to the universal ribosomal protein uL24 family. In terms of assembly, part of the 50S ribosomal subunit.

One of two assembly initiator proteins, it binds directly to the 5'-end of the 23S rRNA, where it nucleates assembly of the 50S subunit. Functionally, located at the polypeptide exit tunnel on the outside of the subunit. This chain is Large ribosomal subunit protein uL24, found in Korarchaeum cryptofilum (strain OPF8).